The chain runs to 391 residues: Oxytocin receptor (391 aa).

Topologically, residues 1–38 (MEGAFAANWSAEAVNGSAAPPGTEGNRTAGPPQRNEAL) are extracellular. 3 N-linked (GlcNAc...) asparagine glycosylation sites follow: Asn-8, Asn-15, and Asn-26. Residues 39 to 63 (ARVEVAVLSLILFLALSGNACVLLA) form a helical membrane-spanning segment. At 64–74 (LRTTRHKHSRL) the chain is on the cytoplasmic side. A helical transmembrane segment spans residues 75–97 (FFFMKHLSIADLAVAVFQVLPQL). The Extracellular portion of the chain corresponds to 98 to 113 (LWDITFRFYGPDLLCR). Cys-112 and Cys-187 are joined by a disulfide. Residues 114–135 (LVKYLQVVGMFASTYLLLLMSL) traverse the membrane as a helical segment. Residues 136-154 (DRCLAICQPLRSLRRRTDR) lie on the Cytoplasmic side of the membrane. Residues 155–175 (LAVLATWLGCLVASAPQVHIF) traverse the membrane as a helical segment. Over 176–202 (SLREVADGVFDCWAVFIQPWGPKAYIT) the chain is Extracellular. Residues 203-225 (WITLAVYIVPVIVLAACYGLISF) traverse the membrane as a helical segment. Residues 226–277 (KIWQNLRLKTEAAAAEASAGAEGAAADCAGRAALARVSNVKLISKAKIRTVK) lie on the Cytoplasmic side of the membrane. Residues 278–296 (MTFIVVLAFIVCWTPFFFK) traverse the membrane as a helical segment. Residues 297–311 (QMWSVWDADAPKEAS) lie on the Extracellular side of the membrane. A helical membrane pass occupies residues 312–334 (AFIIAMLLASLNSCCNPWIYMLF). Topologically, residues 335 to 391 (TGHLFQDLVQRFLCCSFRRLKGSQLGETSVTKKIHSYTFVLSRHSSSQRSCSQPSTV) are cytoplasmic. Ser-370 is subject to Phosphoserine.

It belongs to the G-protein coupled receptor 1 family. Vasopressin/oxytocin receptor subfamily.

It is found in the cell membrane. Receptor for oxytocin. The activity of this receptor is mediated by G proteins which activate a phosphatidylinositol-calcium second messenger system. The chain is Oxytocin receptor (OXTR) from Ovis aries (Sheep).